Consider the following 361-residue polypeptide: Probable dual-specificity RNA methyltransferase RlmN (361 aa).

The active-site Proton acceptor is E91. In terms of domain architecture, Radical SAM core spans 97-329 (QHYGLSVCVT…KKKGGNCVVR (233 aa)). Cysteines 104 and 340 form a disulfide. C111, C115, and C118 together coordinate [4Fe-4S] cluster. S-adenosyl-L-methionine-binding positions include 163-164 (GE), S195, 218-220 (SLH), and N296. Catalysis depends on C340, which acts as the S-methylcysteine intermediate.

This sequence belongs to the radical SAM superfamily. RlmN family. The cofactor is [4Fe-4S] cluster.

It localises to the cytoplasm. It catalyses the reaction adenosine(2503) in 23S rRNA + 2 reduced [2Fe-2S]-[ferredoxin] + 2 S-adenosyl-L-methionine = 2-methyladenosine(2503) in 23S rRNA + 5'-deoxyadenosine + L-methionine + 2 oxidized [2Fe-2S]-[ferredoxin] + S-adenosyl-L-homocysteine. It carries out the reaction adenosine(37) in tRNA + 2 reduced [2Fe-2S]-[ferredoxin] + 2 S-adenosyl-L-methionine = 2-methyladenosine(37) in tRNA + 5'-deoxyadenosine + L-methionine + 2 oxidized [2Fe-2S]-[ferredoxin] + S-adenosyl-L-homocysteine. In terms of biological role, specifically methylates position 2 of adenine 2503 in 23S rRNA and position 2 of adenine 37 in tRNAs. This chain is Probable dual-specificity RNA methyltransferase RlmN, found in Streptococcus pneumoniae (strain Hungary19A-6).